Consider the following 892-residue polypeptide: Translation initiation factor IF-2 (892 aa).

The disordered stretch occupies residues 88–305 (KKRTFVKRDP…SLQQGFQKPA (218 aa)). Composition is skewed to basic and acidic residues over residues 93 to 159 (VKRD…KDKV) and 166 to 216 (DMTK…EENK). The segment covering 254–269 (GRGRNAKAARPAKKGK) has biased composition (basic residues). Residues 270-282 (HAESKADREEARA) show a composition bias toward basic and acidic residues. In terms of domain architecture, tr-type G spans 391 to 560 (PRAPVVTIMG…LLQAEVLELK (170 aa)). The interval 400-407 (GHVDHGKT) is G1. Residue 400 to 407 (GHVDHGKT) coordinates GTP. Positions 425–429 (GITQH) are G2. Positions 446–449 (DTPG) are G3. GTP contacts are provided by residues 446-450 (DTPGH) and 500-503 (NKID). A G4 region spans residues 500–503 (NKID). The tract at residues 536–538 (SAK) is G5.

It belongs to the TRAFAC class translation factor GTPase superfamily. Classic translation factor GTPase family. IF-2 subfamily.

The protein resides in the cytoplasm. In terms of biological role, one of the essential components for the initiation of protein synthesis. Protects formylmethionyl-tRNA from spontaneous hydrolysis and promotes its binding to the 30S ribosomal subunits. Also involved in the hydrolysis of GTP during the formation of the 70S ribosomal complex. The polypeptide is Translation initiation factor IF-2 (Salmonella paratyphi A (strain ATCC 9150 / SARB42)).